The chain runs to 537 residues: CTP synthase (537 aa).

The segment at 1–267 (MTKYIFVTGG…DQIVCDHLKL (267 aa)) is amidoligase domain. Residue Ser13 participates in CTP binding. A UTP-binding site is contributed by Ser13. An ATP-binding site is contributed by 14-19 (SIGKGI). Tyr54 provides a ligand contact to L-glutamine. Asp71 lines the ATP pocket. Residues Asp71 and Glu141 each contribute to the Mg(2+) site. CTP is bound by residues 148–150 (DIE), 188–193 (KTKPTQ), and Lys224. Residues 188-193 (KTKPTQ) and Lys224 contribute to the UTP site. Residue 240-242 (RDV) coordinates ATP. A Glutamine amidotransferase type-1 domain is found at 292–535 (RIALVGKYVE…VTAAVKNKNQ (244 aa)). Position 354 (Gly354) interacts with L-glutamine. The active-site Nucleophile; for glutamine hydrolysis is the Cys381. L-glutamine contacts are provided by residues 382-385 (LGMQ), Glu405, and Arg463. Catalysis depends on residues His508 and Glu510.

It belongs to the CTP synthase family. Homotetramer.

It catalyses the reaction UTP + L-glutamine + ATP + H2O = CTP + L-glutamate + ADP + phosphate + 2 H(+). The catalysed reaction is L-glutamine + H2O = L-glutamate + NH4(+). It carries out the reaction UTP + NH4(+) + ATP = CTP + ADP + phosphate + 2 H(+). It functions in the pathway pyrimidine metabolism; CTP biosynthesis via de novo pathway; CTP from UDP: step 2/2. With respect to regulation, allosterically activated by GTP, when glutamine is the substrate; GTP has no effect on the reaction when ammonia is the substrate. The allosteric effector GTP functions by stabilizing the protein conformation that binds the tetrahedral intermediate(s) formed during glutamine hydrolysis. Inhibited by the product CTP, via allosteric rather than competitive inhibition. Functionally, catalyzes the ATP-dependent amination of UTP to CTP with either L-glutamine or ammonia as the source of nitrogen. Regulates intracellular CTP levels through interactions with the four ribonucleotide triphosphates. The polypeptide is CTP synthase (Streptococcus equi subsp. zooepidemicus (strain H70)).